Consider the following 265-residue polypeptide: MKILSLSLLLLLAATVSASVPGLIELVDSKTIFGNVAELLEKEKLSINYANCRSWHLGVETSNIIDFDTVPANCKDYVEDYLITSKQYQYDSKTVCKEAYFYAKGLALKNDTVNVWIFDLDDTLLSSIPYYAKYGYGTEKTDPGAYWLWLGTGASTPGLPEALHLYQNIIELGIEPIILSDRWKLWKNVTLDNLEAAGVTYWKHLILKPNGSNLRQVVYKSKVRKSLVKKGYNIVGNIGDQWADLVEDTPGRVFKLPNPLYYVPS.

The N-terminal stretch at 1 to 18 (MKILSLSLLLLLAATVSA) is a signal peptide. N-linked (GlcNAc...) asparagine glycosylation is found at Asn110, Asn188, and Asn210.

Belongs to the APS1/VSP family. In terms of tissue distribution, highly expressed in flowers, but also found in leaves, vegetative shoots, petioles, peduncles, and receptacles of floral organs.

In terms of biological role, may function as somatic storage protein during early seedling development. This Arabidopsis thaliana (Mouse-ear cress) protein is Vegetative storage protein 2 (VSP2).